A 245-amino-acid chain; its full sequence is Large ribosomal subunit protein uL3 (245 aa).

An N5-methylglutamine modification is found at glutamine 151. Positions 214 to 245 are disordered; the sequence is KDAPQPGKYRLANSAAPQPAEADAASDTGAQA. Positions 225 to 245 are enriched in low complexity; the sequence is ANSAAPQPAEADAASDTGAQA.

The protein belongs to the universal ribosomal protein uL3 family. Part of the 50S ribosomal subunit. Forms a cluster with proteins L14 and L19. Methylated by PrmB.

In terms of biological role, one of the primary rRNA binding proteins, it binds directly near the 3'-end of the 23S rRNA, where it nucleates assembly of the 50S subunit. The chain is Large ribosomal subunit protein uL3 from Methylocella silvestris (strain DSM 15510 / CIP 108128 / LMG 27833 / NCIMB 13906 / BL2).